We begin with the raw amino-acid sequence, 88 residues long: Small ribosomal subunit protein bS16c (88 aa).

The protein belongs to the bacterial ribosomal protein bS16 family.

The protein localises to the plastid. It localises to the chloroplast. The sequence is that of Small ribosomal subunit protein bS16c from Coffea arabica (Arabian coffee).